A 454-amino-acid polypeptide reads, in one-letter code: Probable spastin homolog Bm1_53365 (454 aa).

218–225 (GPPGNGKT) contacts ATP.

It belongs to the AAA ATPase family. Spastin subfamily. As to quaternary structure, homohexamer. The homohexamer is stabilized by ATP-binding. The homohexamer may adopt a ring conformation through which microtubules pass prior to being severed. Interacts with microtubules.

It is found in the cytoplasm. The protein resides in the cytoskeleton. Its subcellular location is the perinuclear region. The enzyme catalyses n ATP + n H2O + a microtubule = n ADP + n phosphate + (n+1) alpha/beta tubulin heterodimers.. In terms of biological role, severs microtubules, probably in an ATP-dependent fashion. In Brugia malayi (Filarial nematode worm), this protein is Probable spastin homolog Bm1_53365.